The chain runs to 178 residues: Large ribosomal subunit protein uL6 (178 aa).

It belongs to the universal ribosomal protein uL6 family. As to quaternary structure, part of the 50S ribosomal subunit.

This protein binds to the 23S rRNA, and is important in its secondary structure. It is located near the subunit interface in the base of the L7/L12 stalk, and near the tRNA binding site of the peptidyltransferase center. In Campylobacter jejuni subsp. doylei (strain ATCC BAA-1458 / RM4099 / 269.97), this protein is Large ribosomal subunit protein uL6.